Here is a 1148-residue protein sequence, read N- to C-terminus: Transcription-repair-coupling factor (1148 aa).

Residues 615 to 776 (DMCQPLAMDR…MSGMRDLSII (162 aa)) form the Helicase ATP-binding domain. Residue 628-635 (GDVGFGKT) participates in ATP binding. A DEEH box motif is present at residues 729 to 732 (DEEH). Residues 798-951 (VREAILREIL…GFALATHDLE (154 aa)) enclose the Helicase C-terminal domain.

The protein in the N-terminal section; belongs to the UvrB family. This sequence in the C-terminal section; belongs to the helicase family. RecG subfamily. In terms of assembly, monomer. Interacts with UvrA and RNAP.

The protein resides in the cytoplasm. Functionally, couples transcription and DNA repair by recognizing RNA polymerase (RNAP) stalled at DNA lesions. Mediates ATP-dependent release of RNAP and its truncated transcript from the DNA, and recruitment of nucleotide excision repair machinery to the damaged site. Can also dissociate RNAP that is blocked by low concentration of nucleoside triphosphates or by physical obstruction, such as bound proteins. In addition, can rescue arrested complexes by promoting forward translocation. Has ATPase activity, which is required for removal of stalled RNAP, but seems to lack helicase activity. May act through a translocase activity that rewinds upstream DNA, leading either to translocation or to release of RNAP when the enzyme active site cannot continue elongation. This Escherichia coli (strain K12) protein is Transcription-repair-coupling factor.